A 109-amino-acid chain; its full sequence is Large ribosomal subunit protein uL22 (109 aa).

Belongs to the universal ribosomal protein uL22 family. In terms of assembly, part of the 50S ribosomal subunit.

In terms of biological role, this protein binds specifically to 23S rRNA; its binding is stimulated by other ribosomal proteins, e.g. L4, L17, and L20. It is important during the early stages of 50S assembly. It makes multiple contacts with different domains of the 23S rRNA in the assembled 50S subunit and ribosome. The globular domain of the protein is located near the polypeptide exit tunnel on the outside of the subunit, while an extended beta-hairpin is found that lines the wall of the exit tunnel in the center of the 70S ribosome. In Methylibium petroleiphilum (strain ATCC BAA-1232 / LMG 22953 / PM1), this protein is Large ribosomal subunit protein uL22.